The following is an 870-amino-acid chain: Valine--tRNA ligase (870 aa).

A 'HIGH' region motif is present at residues 42-52; sequence PNVTGVLHIGH. The 'KMSKS' region signature appears at 527-531; that stretch reads KMSKS. K530 serves as a coordination point for ATP. A coiled-coil region spans residues 800–870; it reads LENVDLSGIL…ISVELQNLRG (71 aa).

The protein belongs to the class-I aminoacyl-tRNA synthetase family. ValS type 1 subfamily. As to quaternary structure, monomer.

The protein resides in the cytoplasm. It catalyses the reaction tRNA(Val) + L-valine + ATP = L-valyl-tRNA(Val) + AMP + diphosphate. Catalyzes the attachment of valine to tRNA(Val). As ValRS can inadvertently accommodate and process structurally similar amino acids such as threonine, to avoid such errors, it has a 'posttransfer' editing activity that hydrolyzes mischarged Thr-tRNA(Val) in a tRNA-dependent manner. This is Valine--tRNA ligase from Campylobacter jejuni (strain RM1221).